Here is a 398-residue protein sequence, read N- to C-terminus: Phosphoglycerate kinase (398 aa).

Substrate contacts are provided by residues 21 to 23 (DFN), arginine 36, 59 to 62 (HLGR), arginine 119, and arginine 157. ATP contacts are provided by residues lysine 208, glycine 296, glutamate 327, and 354-357 (GGDS).

It belongs to the phosphoglycerate kinase family. In terms of assembly, monomer.

It localises to the cytoplasm. The enzyme catalyses (2R)-3-phosphoglycerate + ATP = (2R)-3-phospho-glyceroyl phosphate + ADP. It functions in the pathway carbohydrate degradation; glycolysis; pyruvate from D-glyceraldehyde 3-phosphate: step 2/5. This is Phosphoglycerate kinase from Streptococcus sanguinis (strain SK36).